We begin with the raw amino-acid sequence, 289 residues long: Transmembrane protein 163 (289 aa).

The segment at 1–65 is disordered; the sequence is MEPAAGIQRR…ESGQFSDGLE (65 aa). The Cytoplasmic segment spans residues 1-88; sequence MEPAAGIQRR…HEAQNYRKKA (88 aa). At serine 11 the chain carries Phosphoserine. Pro residues predominate over residues 16–36; sequence TVPPPPRGHAPPAAAPGPAPL. Residues 42 to 72 are required for interaction with MCOLN1; it reads EPPQLEEERQVRISESGQFSDGLEDRGLLES. 3 positions are modified to phosphoserine: serine 55, serine 57, and serine 61. The helical transmembrane segment at 89 to 109 threads the bilayer; that stretch reads LWVSWFSIIVTLALAVAAFTV. Over 110–116 the chain is Extracellular; the sequence is SVMRYSA. The helical transmembrane segment at 117-137 threads the bilayer; the sequence is SAFGFAFDAILDVLSSAIVLW. Residues 138–150 are Cytoplasmic-facing; that stretch reads RYSNAAAVHSAHR. A helical membrane pass occupies residues 151–171; sequence EYIACVILGVIFLLSSICIVV. Topologically, residues 172-187 are extracellular; the sequence is KAIHDLSTRLLPEVDD. The helical transmembrane segment at 188 to 208 threads the bilayer; sequence FLFSVSILSGILCSILAVLKF. Topologically, residues 209 to 217 are cytoplasmic; sequence MLGKVLTSR. A helical transmembrane segment spans residues 218 to 238; the sequence is ALITDGFNSLVGGVMGFSILL. The Extracellular portion of the chain corresponds to 239–255; the sequence is SAEVFKHDSAVWYLDGS. Residues 256 to 276 traverse the membrane as a helical segment; the sequence is IGVLIGLTIFAYGVKLLIDMV. The Cytoplasmic segment spans residues 277–289; it reads PRVRQTRHYEMFE.

It belongs to the TMEM163 family. As to quaternary structure, homodimer. Interacts with MCOLN1/TRPML1. Interacts with SLC30A1, SLC30A2, SLC30A3 and SLC30A4. Widely expressed. High expression is detected in brain, lung and testis.

The protein resides in the cytoplasmic vesicle. Its subcellular location is the secretory vesicle. It localises to the synaptic vesicle membrane. The protein localises to the early endosome membrane. It is found in the late endosome membrane. The protein resides in the lysosome membrane. Its subcellular location is the cell membrane. The enzyme catalyses Zn(2+)(in) = Zn(2+)(out). Zinc ion transporter that mediates zinc efflux and plays a crucial role in intracellular zinc homeostasis. Binds the divalent cations Zn(2+), Ni(2+), and to a minor extent Cu(2+). Is a functional modulator of P2X purinoceptors, including P2RX1, P2RX3, P2RX4 and P2RX7. Plays a role in central nervous system development and is required for myelination, and survival and proliferation of oligodendrocytes. This chain is Transmembrane protein 163 (TMEM163), found in Homo sapiens (Human).